A 250-amino-acid chain; its full sequence is 4-hydroxy-tetrahydrodipicolinate reductase (250 aa).

Residues 10–15 (GVKGRI), 78–80 (GTT), and 105–108 (APNF) each bind NAD(+). His135 functions as the Proton donor/acceptor in the catalytic mechanism. Residue His136 participates in (S)-2,3,4,5-tetrahydrodipicolinate binding. Lys139 (proton donor) is an active-site residue. Position 145–146 (145–146 (GT)) interacts with (S)-2,3,4,5-tetrahydrodipicolinate.

The protein belongs to the DapB family.

It localises to the cytoplasm. It catalyses the reaction (S)-2,3,4,5-tetrahydrodipicolinate + NAD(+) + H2O = (2S,4S)-4-hydroxy-2,3,4,5-tetrahydrodipicolinate + NADH + H(+). The catalysed reaction is (S)-2,3,4,5-tetrahydrodipicolinate + NADP(+) + H2O = (2S,4S)-4-hydroxy-2,3,4,5-tetrahydrodipicolinate + NADPH + H(+). It participates in amino-acid biosynthesis; L-lysine biosynthesis via DAP pathway; (S)-tetrahydrodipicolinate from L-aspartate: step 4/4. Catalyzes the conversion of 4-hydroxy-tetrahydrodipicolinate (HTPA) to tetrahydrodipicolinate. The protein is 4-hydroxy-tetrahydrodipicolinate reductase of Streptomyces avermitilis (strain ATCC 31267 / DSM 46492 / JCM 5070 / NBRC 14893 / NCIMB 12804 / NRRL 8165 / MA-4680).